Here is a 507-residue protein sequence, read N- to C-terminus: Maturase K (507 aa).

Belongs to the intron maturase 2 family. MatK subfamily.

The protein resides in the plastid. The protein localises to the chloroplast. In terms of biological role, usually encoded in the trnK tRNA gene intron. Probably assists in splicing its own and other chloroplast group II introns. This is Maturase K from Cupaniopsis anacardioides (Carrotwood).